The following is a 332-amino-acid chain: MSGAGVLAGLGTALPARLVTNEELSRHLDTDDEWIRSRTGIGQRYWSDGASTGDLAVEAGQRALKAAGTDTVDLVVLATTTPDHPCPATAPDVADRLGLSGVAAYDIAAVCSGFIYGLASAVAHITAGLVGSALVIGAETYSTILDPLDRTTSVIFGDGAGAVVLRSGSVDERGAFLGFDLGSDGALKDLIVIPGGGSRERAAAERPQPAGAYFTMQGKPVFRHAVTRMTSSAGALLDRTGWSPASVDRFVGHQANARILHAVADQLRIDGARTVIDLDRVGNTSAASIPLALSRACGEGLLSPGDRVLLSAFGGGLTWGSTALLWPDITAL.

Residues C111 and H253 contribute to the active site. The interval 254 to 258 (QANAR) is ACP-binding. N283 is a catalytic residue.

The protein belongs to the thiolase-like superfamily. FabH family. In terms of assembly, homodimer.

It is found in the cytoplasm. It carries out the reaction malonyl-[ACP] + acetyl-CoA + H(+) = 3-oxobutanoyl-[ACP] + CO2 + CoA. Its pathway is lipid metabolism; fatty acid biosynthesis. Functionally, catalyzes the condensation reaction of fatty acid synthesis by the addition to an acyl acceptor of two carbons from malonyl-ACP. Catalyzes the first condensation reaction which initiates fatty acid synthesis and may therefore play a role in governing the total rate of fatty acid production. Possesses both acetoacetyl-ACP synthase and acetyl transacylase activities. Its substrate specificity determines the biosynthesis of branched-chain and/or straight-chain of fatty acids. This is Beta-ketoacyl-[acyl-carrier-protein] synthase III 5 from Streptomyces coelicolor (strain ATCC BAA-471 / A3(2) / M145).